We begin with the raw amino-acid sequence, 257 residues long: MLAKRIVPCLDVKEGKVVKGVQFRNHEIVGDIVPLAARYAEEGADELVFYDITASAHDRVIDKSWVSRVAERIDIPFCVAGGIKTIAQAREKLAFGADKISINSPALTDPSLIERLQDEFGRQCIVIGIDSYFDAQSNSYKVKQFTGDEAATKDTQWFTQDWVQEVQKRGCGEIVLNVMNQDGVRQGYDLKQLSIVREICDVPLIASGGAGTMAHFKDVFEIARVDAALAASVFHKGIIDIGELKNYLFENSIAIRR.

Catalysis depends on residues Asp-11 and Asp-130.

The protein belongs to the HisA/HisF family. Heterodimer of HisH and HisF.

It localises to the cytoplasm. The enzyme catalyses 5-[(5-phospho-1-deoxy-D-ribulos-1-ylimino)methylamino]-1-(5-phospho-beta-D-ribosyl)imidazole-4-carboxamide + L-glutamine = D-erythro-1-(imidazol-4-yl)glycerol 3-phosphate + 5-amino-1-(5-phospho-beta-D-ribosyl)imidazole-4-carboxamide + L-glutamate + H(+). Its pathway is amino-acid biosynthesis; L-histidine biosynthesis; L-histidine from 5-phospho-alpha-D-ribose 1-diphosphate: step 5/9. IGPS catalyzes the conversion of PRFAR and glutamine to IGP, AICAR and glutamate. The HisF subunit catalyzes the cyclization activity that produces IGP and AICAR from PRFAR using the ammonia provided by the HisH subunit. This chain is Imidazole glycerol phosphate synthase subunit HisF, found in Shewanella sediminis (strain HAW-EB3).